The sequence spans 324 residues: Coproporphyrin III ferrochelatase (324 aa).

Histidine 184 and glutamate 266 together coordinate Fe(2+).

The protein belongs to the ferrochelatase family.

The protein localises to the cytoplasm. It catalyses the reaction Fe-coproporphyrin III + 2 H(+) = coproporphyrin III + Fe(2+). It participates in porphyrin-containing compound metabolism; protoheme biosynthesis. In terms of biological role, involved in coproporphyrin-dependent heme b biosynthesis. Catalyzes the insertion of ferrous iron into coproporphyrin III to form Fe-coproporphyrin III. The sequence is that of Coproporphyrin III ferrochelatase from Lactiplantibacillus plantarum (strain ATCC BAA-793 / NCIMB 8826 / WCFS1) (Lactobacillus plantarum).